The chain runs to 787 residues: Protein FAM149A (787 aa).

Disordered stretches follow at residues 22-105, 144-175, 189-226, 238-284, 432-455, 573-602, and 665-697; these read SPAV…SSGA, GSNS…APGP, EEWT…PTNF, ASES…SWRD, DGDE…GLPP, LQQR…ASSR, and AVQT…SYRG. Positions 37–46 are enriched in polar residues; that stretch reads SVDSGASTSL. Composition is skewed to low complexity over residues 51 to 65 and 96 to 105; these read TLTL…TAAS and SGSLPSSSGA. A compositionally biased stretch (polar residues) spans 144–155; it reads GSNSVTASSPRN. A compositionally biased stretch (acidic residues) spans 189-200; that stretch reads EEWTSDSDSQDD. Positions 201-220 are enriched in basic and acidic residues; sequence PEGRGLSEGLRKQSSEKSKD. A compositionally biased stretch (low complexity) spans 239 to 250; sequence SESPSSFSSSGS. The span at 251–261 shows a compositional bias: polar residues; the sequence is RTPTEAHNSWP. Over residues 262-274 the composition is skewed to low complexity; it reads GSSTQSSTTGLST.

It belongs to the FAM149 family.

This chain is Protein FAM149A (Fam149a), found in Mus musculus (Mouse).